A 609-amino-acid polypeptide reads, in one-letter code: Tyrosyl-DNA phosphodiesterase 1 (609 aa).

The segment covering 1-12 (MSQESSYGKWTI) has biased composition (polar residues). The segment at 1–154 (MSQESSYGKW…EYETSGEGQD (154 aa)) is disordered. 3 positions are modified to phosphoserine: Ser-61, Ser-119, and Ser-132. Basic and acidic residues predominate over residues 127–143 (KVEDRSPPDSHRAQRAD). Thr-148 bears the Phosphothreonine mark. Position 149 is a phosphoserine (Ser-149). His-264 functions as the Nucleophile in the catalytic mechanism. Lys-266 contacts substrate. The segment at 401-404 (SIGS) is interaction with DNA. The active-site Proton donor/acceptor is the His-494. Residue Lys-496 coordinates substrate.

The protein belongs to the tyrosyl-DNA phosphodiesterase family. In terms of assembly, monomer.

Its subcellular location is the nucleus. The protein localises to the cytoplasm. In terms of biological role, DNA repair enzyme that can remove a variety of covalent adducts from DNA through hydrolysis of a 3'-phosphodiester bond, giving rise to DNA with a free 3' phosphate. Catalyzes the hydrolysis of dead-end complexes between DNA and the topoisomerase I active site tyrosine residue. Hydrolyzes 3'-phosphoglycolates on protruding 3' ends on DNA double-strand breaks due to DNA damage by radiation and free radicals. Acts on blunt-ended double-strand DNA breaks and on single-stranded DNA. Has low 3'exonuclease activity and can remove a single nucleoside from the 3'end of DNA and RNA molecules with 3'hydroxyl groups. Has no exonuclease activity towards DNA or RNA with a 3'phosphate. The sequence is that of Tyrosyl-DNA phosphodiesterase 1 (Tdp1) from Rattus norvegicus (Rat).